The primary structure comprises 135 residues: CDGSH iron-sulfur domain-containing protein 2B (135 aa).

Over 1-37 the chain is Lumenal; it reads MVLETISKIIKTQLPAYLKKFPLPETIGGFARLTVLD. Residues 38–60 traverse the membrane as a helical segment; the sequence is WLRLLPLLGILALLGYLTIRPFL. Residues 61 to 135 lie on the Cytoplasmic side of the membrane; it reads PKKKKQKDSL…GPLILKKKIL (75 aa). 4 residues coordinate [2Fe-2S] cluster: Cys99, Cys101, Cys110, and His114.

Belongs to the CISD protein family. CISD2 subfamily. Homodimer. [2Fe-2S] cluster serves as cofactor.

Its subcellular location is the endoplasmic reticulum membrane. It localises to the mitochondrion outer membrane. Functionally, regulator of autophagy that contributes to antagonize becn1-mediated cellular autophagy at the endoplasmic reticulum. Participates in the interaction of bcl2 with becn1 and is required for bcl2-mediated depression of endoplasmic reticulum Ca(2+) stores during autophagy. This chain is CDGSH iron-sulfur domain-containing protein 2B (cisd2b), found in Salmo salar (Atlantic salmon).